An 81-amino-acid chain; its full sequence is Thrombin-like enzyme collinein-3 (81 aa).

Residue Asp4 is part of the active site. Residues Cys51 and Cys68 are joined by a disulfide bond.

In terms of assembly, monomer. In terms of tissue distribution, expressed by the vanom gland.

Its subcellular location is the secreted. In terms of biological role, thrombin-like snake venom serine protease. The polypeptide is Thrombin-like enzyme collinein-3 (Crotalus durissus collilineatus (Brazilian rattlesnake)).